A 120-amino-acid polypeptide reads, in one-letter code: MKRTGPTDINLRRLIRYLRKKSNEEGVKIWKDIAWRLERPRRQRAEVNVSKINRYTKEGDTVIVPGSVLGAGKLEHKVVVAAWKFSETAKKKITEAGGEAITIEELIERNPKGSGVIIME.

It belongs to the eukaryotic ribosomal protein eL18 family.

The chain is Large ribosomal subunit protein eL18 from Thermococcus onnurineus (strain NA1).